Consider the following 231-residue polypeptide: Putative transglycosylase H16_A0665 (231 aa).

Residues 8 to 28 (FIKLLVLAVIGGALLAAIAIL) form a helical membrane-spanning segment.

Belongs to the glycosyltransferase 51 family.

It is found in the secreted. It localises to the membrane. It functions in the pathway cell wall biogenesis; peptidoglycan biosynthesis. Functionally, cell wall formation. The chain is Putative transglycosylase H16_A0665 from Cupriavidus necator (strain ATCC 17699 / DSM 428 / KCTC 22496 / NCIMB 10442 / H16 / Stanier 337) (Ralstonia eutropha).